Reading from the N-terminus, the 702-residue chain is 1,4-alpha-glucan-branching enzyme (702 aa).

Alanine 2 bears the N-acetylalanine mark. Residues 62–63 and 91–93 contribute to the substrate site; these read NE and WAP. Tryptophan 107 lines the (1,4-alpha-D-glucosyl)n pocket. 118-121 lines the substrate pocket; the sequence is DYGK. Lysine 143 contacts (1,4-alpha-D-glucosyl)n. Tyrosine 173 bears the Phosphotyrosine mark. 333–336 is a binding site for substrate; that stretch reads EILR. The Nucleophile role is filled by aspartate 357. Glutamate 412 functions as the Proton donor in the catalytic mechanism.

The protein belongs to the glycosyl hydrolase 13 family. GlgB subfamily. In terms of assembly, monomer.

It catalyses the reaction Transfers a segment of a (1-&gt;4)-alpha-D-glucan chain to a primary hydroxy group in a similar glucan chain.. It participates in glycan biosynthesis; glycogen biosynthesis. Functionally, glycogen-branching enzyme participates in the glycogen biosynthetic process along with glycogenin and glycogen synthase. Generates alpha-1,6-glucosidic branches from alpha-1,4-linked glucose chains, to increase solubility of the glycogen polymer. The polypeptide is 1,4-alpha-glucan-branching enzyme (GBE1) (Homo sapiens (Human)).